The primary structure comprises 77 residues: MRQLFNKLKWTGAKAYFSYVSRGAAGGEEVASIDDVVEVGSGGVTISTGSGERYIPYHRIVEVRLATGEVLLDRRKR.

The protein belongs to the UPF0248 family.

This Pyrobaculum calidifontis (strain DSM 21063 / JCM 11548 / VA1) protein is UPF0248 protein Pcal_0252.